Reading from the N-terminus, the 212-residue chain is 2,3-bisphosphoglycerate-dependent phosphoglycerate mutase (212 aa).

Substrate is bound by residues 9-16 (RHGQSEWN), 22-23 (TG), Arg-61, 88-91 (ERDY), Lys-99, 115-116 (RR), and 159-160 (GN). The active-site Tele-phosphohistidine intermediate is the His-10. Catalysis depends on Glu-88, which acts as the Proton donor/acceptor.

It belongs to the phosphoglycerate mutase family. BPG-dependent PGAM subfamily. In terms of assembly, homodimer.

It carries out the reaction (2R)-2-phosphoglycerate = (2R)-3-phosphoglycerate. It participates in carbohydrate degradation; glycolysis; pyruvate from D-glyceraldehyde 3-phosphate: step 3/5. Functionally, catalyzes the interconversion of 2-phosphoglycerate and 3-phosphoglycerate. This is 2,3-bisphosphoglycerate-dependent phosphoglycerate mutase from Methylorubrum extorquens (strain CM4 / NCIMB 13688) (Methylobacterium extorquens).